The following is a 188-amino-acid chain: Protein GrpE (188 aa).

Residues 1–22 (MEENKQNQNLNTEETTEQQTEA) are compositionally biased toward low complexity. The interval 1–26 (MEENKQNQNLNTEETTEQQTEAETVE) is disordered.

The protein belongs to the GrpE family. In terms of assembly, homodimer.

It is found in the cytoplasm. In terms of biological role, participates actively in the response to hyperosmotic and heat shock by preventing the aggregation of stress-denatured proteins, in association with DnaK and GrpE. It is the nucleotide exchange factor for DnaK and may function as a thermosensor. Unfolded proteins bind initially to DnaJ; upon interaction with the DnaJ-bound protein, DnaK hydrolyzes its bound ATP, resulting in the formation of a stable complex. GrpE releases ADP from DnaK; ATP binding to DnaK triggers the release of the substrate protein, thus completing the reaction cycle. Several rounds of ATP-dependent interactions between DnaJ, DnaK and GrpE are required for fully efficient folding. This chain is Protein GrpE, found in Exiguobacterium sibiricum (strain DSM 17290 / CCUG 55495 / CIP 109462 / JCM 13490 / 255-15).